The following is a 214-amino-acid chain: Uracil phosphoribosyltransferase (214 aa).

5-phospho-alpha-D-ribose 1-diphosphate is bound by residues Arg-107 and 135–143; that span reads DPMLATGKT. Uracil contacts are provided by residues Ile-198 and 203–205; that span reads GDA. Asp-204 serves as a coordination point for 5-phospho-alpha-D-ribose 1-diphosphate.

This sequence belongs to the UPRTase family. Requires Mg(2+) as cofactor.

The catalysed reaction is UMP + diphosphate = 5-phospho-alpha-D-ribose 1-diphosphate + uracil. The protein operates within pyrimidine metabolism; UMP biosynthesis via salvage pathway; UMP from uracil: step 1/1. With respect to regulation, allosterically activated by GTP. Functionally, catalyzes the conversion of uracil and 5-phospho-alpha-D-ribose 1-diphosphate (PRPP) to UMP and diphosphate. The polypeptide is Uracil phosphoribosyltransferase (Aeropyrum pernix (strain ATCC 700893 / DSM 11879 / JCM 9820 / NBRC 100138 / K1)).